A 99-amino-acid chain; its full sequence is MICOS complex subunit MIC10 (99 aa).

The next 2 helical transmembrane spans lie at 27-43 (RFVYSSLGGAFAGLLFF) and 50-66 (WASIAFGAGIGIGSAYT).

This sequence belongs to the MICOS complex subunit Mic10 family. In terms of assembly, component of the mitochondrial contact site and cristae organizing system (MICOS) complex. The MICOS complex associates with mitochondrial outer membrane proteins. Present in a large lipid-enriched complex called mitochondrial transmembrane lipoprotein (MTL) complex made of proteins located in the two mitochondrial membranes, including the TOM complex and the core components of the MICOS complex and containing at least digalactosyldiacylglycerol (DGDG).

The protein resides in the mitochondrion inner membrane. Component of the MICOS complex, a large protein complex of the mitochondrial inner membrane that plays crucial roles in the maintenance of crista junctions, inner membrane architecture, and formation of contact sites to the outer membrane. In Arabidopsis thaliana (Mouse-ear cress), this protein is MICOS complex subunit MIC10.